Consider the following 679-residue polypeptide: Methionine--tRNA ligase (679 aa).

The 'HIGH' region motif lies at 15–25; sequence PYANGPVHIGH. Residues C147, C150, C160, and C163 each contribute to the Zn(2+) site. The 'KMSKS' region motif lies at 332–336; it reads KISTS. T335 lines the ATP pocket. The 102-residue stretch at 578–679 folds into the tRNA-binding domain; it reads DFMKLDIRVG…REVKPGSEVK (102 aa).

Belongs to the class-I aminoacyl-tRNA synthetase family. MetG type 1 subfamily. Homodimer. Zn(2+) is required as a cofactor.

It localises to the cytoplasm. It carries out the reaction tRNA(Met) + L-methionine + ATP = L-methionyl-tRNA(Met) + AMP + diphosphate. Functionally, is required not only for elongation of protein synthesis but also for the initiation of all mRNA translation through initiator tRNA(fMet) aminoacylation. The polypeptide is Methionine--tRNA ligase (Bacteroides fragilis (strain ATCC 25285 / DSM 2151 / CCUG 4856 / JCM 11019 / LMG 10263 / NCTC 9343 / Onslow / VPI 2553 / EN-2)).